The primary structure comprises 300 residues: 3-methyl-2-oxobutanoate hydroxymethyltransferase (300 aa).

Mg(2+) contacts are provided by Asp-75 and Asp-118. Residues 75–76 (DS), Asp-118, and Lys-147 each bind 3-methyl-2-oxobutanoate. Mg(2+) is bound at residue Glu-149. Glu-216 functions as the Proton acceptor in the catalytic mechanism.

This sequence belongs to the PanB family. In terms of assembly, homodecamer; pentamer of dimers. Requires Mg(2+) as cofactor.

It localises to the cytoplasm. It carries out the reaction 3-methyl-2-oxobutanoate + (6R)-5,10-methylene-5,6,7,8-tetrahydrofolate + H2O = 2-dehydropantoate + (6S)-5,6,7,8-tetrahydrofolate. It functions in the pathway cofactor biosynthesis; (R)-pantothenate biosynthesis; (R)-pantoate from 3-methyl-2-oxobutanoate: step 1/2. Functionally, catalyzes the reversible reaction in which hydroxymethyl group from 5,10-methylenetetrahydrofolate is transferred onto alpha-ketoisovalerate to form ketopantoate. This is 3-methyl-2-oxobutanoate hydroxymethyltransferase from Verminephrobacter eiseniae (strain EF01-2).